The chain runs to 96 residues: Co-chaperonin GroES (96 aa).

The protein belongs to the GroES chaperonin family. In terms of assembly, heptamer of 7 subunits arranged in a ring. Interacts with the chaperonin GroEL.

It localises to the cytoplasm. In terms of biological role, together with the chaperonin GroEL, plays an essential role in assisting protein folding. The GroEL-GroES system forms a nano-cage that allows encapsulation of the non-native substrate proteins and provides a physical environment optimized to promote and accelerate protein folding. GroES binds to the apical surface of the GroEL ring, thereby capping the opening of the GroEL channel. This is Co-chaperonin GroES from Idiomarina loihiensis (strain ATCC BAA-735 / DSM 15497 / L2-TR).